The following is a 127-amino-acid chain: Phospholipase A2 homolog otoconin-22 (127 aa).

A glycan (N-linked (GlcNAc...) asparagine) is linked at Asn-20. Cystine bridges form between Cys-26-Cys-120, Cys-28-Cys-44, Cys-43-Cys-99, Cys-49-Cys-127, Cys-50-Cys-92, Cys-59-Cys-85, and Cys-78-Cys-90. A glycan (N-linked (GlcNAc...) asparagine) is linked at Asn-113.

The protein belongs to the phospholipase A2 family. Monomer. As to expression, otoconial membrane in the maculae of the saccule and utricle. Otoconia are composites of proteins and inorganic crystals formed in the peripheral portion of the vestibular system of vertebrates. The otoconial membranes contain small crystals of calcium carbonate known as otoliths (ear stones) if there is a single deposit or as otoconia (ear dust) if there are many. Each mineral polymorph of otoconia has a protein unique to that polymorph.

Its subcellular location is the secreted. Its function is as follows. Major protein of the aragonitic otoconia. It is unlikely that this protein has phospholipase A2 activity. The protein is Phospholipase A2 homolog otoconin-22 of Xenopus laevis (African clawed frog).